We begin with the raw amino-acid sequence, 118 residues long: UPF0102 protein Cphy_2398 (118 aa).

This sequence belongs to the UPF0102 family.

The protein is UPF0102 protein Cphy_2398 of Lachnoclostridium phytofermentans (strain ATCC 700394 / DSM 18823 / ISDg) (Clostridium phytofermentans).